The chain runs to 345 residues: Leucine-rich repeat and transmembrane domain-containing protein 1 (345 aa).

An N-terminal signal peptide occupies residues 1–27; it reads MKGELLLFSSVIVLLQVVCSCPDKCYC. The LRRNT domain maps to 28 to 50; sequence QSSTNFVDCSQQGLAEIPSHLPP. At 28 to 288 the chain is on the extracellular side; the sequence is QSSTNFVDCS…PANLRHAIAT (261 aa). LRR repeat units lie at residues 51 to 72, 75 to 96, 99 to 120, 123 to 144, and 147 to 168; these read QTRTLHLQDNQIHHLPAFAFRS, WLMTLNLSNNSLSNLAPGAFHG, HLQVLNLTQNSLLSLESRLFHS, QLRELDLSSNNISHLPTSLGET, and NLTILAVQQNQLQQLDRALLES. Residue Asn104 is glycosylated (N-linked (GlcNAc...) asparagine). The N-linked (GlcNAc...) asparagine glycan is linked to Asn147. In terms of domain architecture, LRRCT spans 180–234; that stretch reads NLWKCNCHLLGLKLWLEKFVYKGGLTDGIICESPDTWKGKDLLRIPHELYQPCPL. The helical transmembrane segment at 289-309 threads the bilayer; that stretch reads VIITGVVCGIVCLMMLAAAIY. Residues 310-345 are Cytoplasmic-facing; the sequence is GCTYAAITAQYHGGPLAQTNDPGKVEEKERFDSSPA. The segment at 326–345 is disordered; it reads AQTNDPGKVEEKERFDSSPA. The span at 332 to 345 shows a compositional bias: basic and acidic residues; it reads GKVEEKERFDSSPA.

It is found in the membrane. This chain is Leucine-rich repeat and transmembrane domain-containing protein 1 (LRTM1), found in Homo sapiens (Human).